The sequence spans 833 residues: Capsid-associated protein Vp91 (833 aa).

The signal sequence occupies residues Met-1–Ser-18. N-linked (GlcNAc...) asparagine; by host glycosylation is found at Asn-137, Asn-180, Asn-199, and Asn-210. A C2HC BV-type zinc finger spans residues Cys-147–Cys-196. Cystine bridges form between Cys-207–Cys-220 and Cys-260–Cys-273. The Chitin-binding type-2 domain occupies Asn-223 to Phe-281. N-linked (GlcNAc...) asparagine; by host glycosylation is found at Asn-408, Asn-413, Asn-588, and Asn-609. Positions Glu-647 to Glu-673 are disordered.

Its subcellular location is the virion. Probable capsid-associated protein. The polypeptide is Capsid-associated protein Vp91 (Choristoneura fumiferana nuclear polyhedrosis virus (CfMNPV)).